A 184-amino-acid polypeptide reads, in one-letter code: ATP synthase subunit b 1 (184 aa).

A helical transmembrane segment spans residues Leu-4–Ser-24.

The protein belongs to the ATPase B chain family. As to quaternary structure, F-type ATPases have 2 components, F(1) - the catalytic core - and F(0) - the membrane proton channel. F(1) has five subunits: alpha(3), beta(3), gamma(1), delta(1), epsilon(1). F(0) has three main subunits: a(1), b(2) and c(10-14). The alpha and beta chains form an alternating ring which encloses part of the gamma chain. F(1) is attached to F(0) by a central stalk formed by the gamma and epsilon chains, while a peripheral stalk is formed by the delta and b chains.

It is found in the cell inner membrane. Functionally, f(1)F(0) ATP synthase produces ATP from ADP in the presence of a proton or sodium gradient. F-type ATPases consist of two structural domains, F(1) containing the extramembraneous catalytic core and F(0) containing the membrane proton channel, linked together by a central stalk and a peripheral stalk. During catalysis, ATP synthesis in the catalytic domain of F(1) is coupled via a rotary mechanism of the central stalk subunits to proton translocation. Its function is as follows. Component of the F(0) channel, it forms part of the peripheral stalk, linking F(1) to F(0). The chain is ATP synthase subunit b 1 from Cereibacter sphaeroides (strain ATCC 17029 / ATH 2.4.9) (Rhodobacter sphaeroides).